Reading from the N-terminus, the 288-residue chain is uncharacterized protein (288 aa).

Disordered stretches follow at residues 31–52 (KAVD…EAPS) and 179–288 (YPSK…VELK). Positions 206 to 217 (RPSSPTNFSKLI) are enriched in polar residues. Over residues 221–236 (YKDEWLQQQADSDKRA) the composition is skewed to basic and acidic residues. Composition is skewed to low complexity over residues 237–249 (PQTP…SPSP) and 267–276 (AAESSPLSSA).

This is an uncharacterized protein from Bos taurus (Bovine).